The following is a 170-amino-acid chain: Small ribosomal subunit protein bS18c (170 aa).

2 disordered regions span residues 1-59 and 151-170; these read MYIS…IGPG and NLRNSNQNLRNNNRNLSSDC. 7 consecutive repeats follow at residues 4–10, 11–17, 18–24, 25–31, 32–38, 39–45, and 46–52; these read SKQPFRK, SKQTFHK, FKQPFRK, and SKQPFRR. A 7 X 7 AA tandem repeats region spans residues 4 to 52; that stretch reads SKQPFRKSKQPFRKSKQTFHKSKQPFRKFKQPFRKSKQPFRKSKQPFRR. Positions 7-55 are enriched in basic residues; that stretch reads PFRKSKQPFRKSKQTFHKSKQPFRKFKQPFRKSKQPFRKSKQPFRRRSR.

Belongs to the bacterial ribosomal protein bS18 family. In terms of assembly, part of the 30S ribosomal subunit.

Its subcellular location is the plastid. It is found in the chloroplast. This Zea mays (Maize) protein is Small ribosomal subunit protein bS18c (rps18).